The sequence spans 77 residues: Dermatoxin-S1 (77 aa).

A signal peptide spans M1–C22. Residues E23–R44 constitute a propeptide that is removed on maturation. Glutamine amide is present on Q76.

Expressed by the skin glands.

It localises to the secreted. The protein localises to the target cell membrane. Functionally, antimicrobial peptide with potent activity against Gram-positive bacteria B.megaterium, C.glutamicum and S.aureus and mollicutes A.laidlawii and S.melliferum. Less active against Gram-negative bacteria B.cepacia, P.aeruginosa, S.typhimurium and S.meliloti. Probably acts by disturbing membrane functions with its amphipathic structure. The chain is Dermatoxin-S1 from Phyllomedusa sauvagei (Sauvage's leaf frog).